The chain runs to 331 residues: MAVKISTIEVLILSLALLSFGHGCYGQLRLGFYSQNCQNVENIVSKVVGEAFIKDSSIAPAMIRLYFHDCFSNGCDASLLLDGSNSEKKASPNLSVRGYEVIDDIKSAVEKECDRVVSCADIIALATRDLVTLASGGKTRYEIPTGRLDGKISSALLVDLPSPKMTVAETAAKFDQRKLSLNDMVLLLGGHTIGVTHCSFIMDRLYNFQNTQKPDPSMDPKLVEELSAKCPKSSSTDGIISLDQNATSSNTMDVSFYKEIKVSRGVLHIDQKLAIDDLTSKMVTDIANGNDFLVRFGQAMVNLGSVRVISKPKDGEIRRSCRSTCNNPLCV.

The first 26 residues, 1-26 (MAVKISTIEVLILSLALLSFGHGCYG), serve as a signal peptide directing secretion. Cystine bridges form between C37/C113, C70/C75, C119/C321, and C198/C230. H68 functions as the Proton acceptor in the catalytic mechanism. Residues D69, G74, D76, and S78 each contribute to the Ca(2+) site. P161 provides a ligand contact to substrate. Heme b is bound at residue H191. Residue T192 participates in Ca(2+) binding. Residue N245 is glycosylated (N-linked (GlcNAc...) asparagine). S248 and D253 together coordinate Ca(2+).

It belongs to the peroxidase family. Classical plant (class III) peroxidase subfamily. Requires heme b as cofactor. Ca(2+) serves as cofactor. Expressed in roots, slightly in leaves.

Its subcellular location is the secreted. It carries out the reaction 2 a phenolic donor + H2O2 = 2 a phenolic radical donor + 2 H2O. Its function is as follows. Removal of H(2)O(2), oxidation of toxic reductants, biosynthesis and degradation of lignin, suberization, auxin catabolism, response to environmental stresses such as wounding, pathogen attack and oxidative stress. These functions might be dependent on each isozyme/isoform in each plant tissue. The polypeptide is Peroxidase 60 (PER60) (Arabidopsis thaliana (Mouse-ear cress)).